A 143-amino-acid polypeptide reads, in one-letter code: MSRHYEVVFLVHPDQSEQVPAMIERYKSLIEGGNGTIHRLEDWGRRQLAYPIQNLVKAHYVLLNIEVDQAVLSELVESFRFNDAVLRHLVVKRDGPDTEQSLIMKSKDEKGDKHERSERRRRDDEEGDVPAATDTDGDNAEAA.

The segment at 97–143 is disordered; it reads DTEQSLIMKSKDEKGDKHERSERRRRDDEEGDVPAATDTDGDNAEAA. Positions 105–124 are enriched in basic and acidic residues; it reads KSKDEKGDKHERSERRRRDD.

The protein belongs to the bacterial ribosomal protein bS6 family.

Its function is as follows. Binds together with bS18 to 16S ribosomal RNA. The sequence is that of Small ribosomal subunit protein bS6 from Xanthomonas oryzae pv. oryzae (strain MAFF 311018).